Reading from the N-terminus, the 340-residue chain is Ketol-acid reductoisomerase (NADP(+)) (340 aa).

Residues 1-183 (MAITVYYDKD…GGGRTGIIET (183 aa)) form the KARI N-terminal Rossmann domain. Residues 26–29 (FGSQ), Arg-49, Ser-52, Ser-54, and 84–87 (DEIQ) each bind NADP(+). His-109 is an active-site residue. An NADP(+)-binding site is contributed by Gly-135. The 146-residue stretch at 184–329 (TFKAETETDL…RNLRAMMPWI (146 aa)) folds into the KARI C-terminal knotted domain. Mg(2+) contacts are provided by Asp-192, Glu-196, Glu-228, and Glu-232. Position 253 (Ser-253) interacts with substrate.

This sequence belongs to the ketol-acid reductoisomerase family. Mg(2+) serves as cofactor.

It carries out the reaction (2R)-2,3-dihydroxy-3-methylbutanoate + NADP(+) = (2S)-2-acetolactate + NADPH + H(+). It catalyses the reaction (2R,3R)-2,3-dihydroxy-3-methylpentanoate + NADP(+) = (S)-2-ethyl-2-hydroxy-3-oxobutanoate + NADPH + H(+). Its pathway is amino-acid biosynthesis; L-isoleucine biosynthesis; L-isoleucine from 2-oxobutanoate: step 2/4. The protein operates within amino-acid biosynthesis; L-valine biosynthesis; L-valine from pyruvate: step 2/4. In terms of biological role, involved in the biosynthesis of branched-chain amino acids (BCAA). Catalyzes an alkyl-migration followed by a ketol-acid reduction of (S)-2-acetolactate (S2AL) to yield (R)-2,3-dihydroxy-isovalerate. In the isomerase reaction, S2AL is rearranged via a Mg-dependent methyl migration to produce 3-hydroxy-3-methyl-2-ketobutyrate (HMKB). In the reductase reaction, this 2-ketoacid undergoes a metal-dependent reduction by NADPH to yield (R)-2,3-dihydroxy-isovalerate. The chain is Ketol-acid reductoisomerase (NADP(+)) from Campylobacter jejuni subsp. jejuni serotype O:6 (strain 81116 / NCTC 11828).